The primary structure comprises 355 residues: Peptide chain release factor 1 (355 aa).

Gln-233 bears the N5-methylglutamine mark. Basic and acidic residues predominate over residues 280–293 (ERRKKEQERADSRR). Residues 280–308 (ERRKKEQERADSRRGQVGSGDRSERIRTY) form a disordered region.

The protein belongs to the prokaryotic/mitochondrial release factor family. Post-translationally, methylated by PrmC. Methylation increases the termination efficiency of RF1.

The protein localises to the cytoplasm. In terms of biological role, peptide chain release factor 1 directs the termination of translation in response to the peptide chain termination codons UAG and UAA. The chain is Peptide chain release factor 1 from Rickettsia felis (strain ATCC VR-1525 / URRWXCal2) (Rickettsia azadi).